Consider the following 192-residue polypeptide: Outer-membrane lipoprotein LolB (192 aa).

A signal peptide spans 1-17 (MTYRTLCILAFTALISA). C18 is lipidated: N-palmitoyl cysteine. The S-diacylglycerol cysteine moiety is linked to residue C18.

The protein belongs to the LolB family. Monomer.

Its subcellular location is the cell outer membrane. Plays a critical role in the incorporation of lipoproteins in the outer membrane after they are released by the LolA protein. In Marinomonas sp. (strain MWYL1), this protein is Outer-membrane lipoprotein LolB.